Consider the following 328-residue polypeptide: Lateral signaling target 1 protein (328 aa).

Disordered stretches follow at residues 56 to 78, 108 to 135, and 177 to 200; these read SSQDSGVLSSLSSSPQQRSGLRS, PTHYNSRKTSGPPPLMRTPSSGFSSASS, and PVQPSTSTSRNNVSQISGSSRLNG. Residues 178-200 are compositionally biased toward polar residues; that stretch reads VQPSTSTSRNNVSQISGSSRLNG.

In terms of assembly, interacts with fbf-2; the interaction probably mediates the release of the C-terminal tail of fbf-2 from the RNA-binding domain, thereby altering its RNA-binding affinity.

Its function is as follows. Plays a role in germline stem cell maintenance, perhaps acting in concert with mRNA-binding factor fbf-2. May regulate fbf-2 by modulating RNA-binding and perhaps by competition with the intramolecular interaction between the fbf-2 RNA-binding domain and C-terminal tail. The sequence is that of Lateral signaling target 1 protein from Caenorhabditis elegans.